Reading from the N-terminus, the 267-residue chain is Orotidine 5'-phosphate decarboxylase (267 aa).

Substrate-binding positions include aspartate 38, 60–62 (KTH), 92–101 (DRKFADIGNT), tyrosine 218, and arginine 236. Lysine 94 (proton donor) is an active-site residue.

This sequence belongs to the OMP decarboxylase family.

It catalyses the reaction orotidine 5'-phosphate + H(+) = UMP + CO2. It participates in pyrimidine metabolism; UMP biosynthesis via de novo pathway; UMP from orotate: step 2/2. The sequence is that of Orotidine 5'-phosphate decarboxylase (URA3) from Debaryomyces hansenii (strain ATCC 36239 / CBS 767 / BCRC 21394 / JCM 1990 / NBRC 0083 / IGC 2968) (Yeast).